We begin with the raw amino-acid sequence, 211 residues long: Methylthioribulose-1-phosphate dehydratase (211 aa).

Positions 101 and 103 each coordinate Zn(2+).

It belongs to the aldolase class II family. MtnB subfamily. Zn(2+) serves as cofactor.

It catalyses the reaction 5-(methylsulfanyl)-D-ribulose 1-phosphate = 5-methylsulfanyl-2,3-dioxopentyl phosphate + H2O. The protein operates within amino-acid biosynthesis; L-methionine biosynthesis via salvage pathway; L-methionine from S-methyl-5-thio-alpha-D-ribose 1-phosphate: step 2/6. In terms of biological role, catalyzes the dehydration of methylthioribulose-1-phosphate (MTRu-1-P) into 2,3-diketo-5-methylthiopentyl-1-phosphate (DK-MTP-1-P). The sequence is that of Methylthioribulose-1-phosphate dehydratase from Alcanivorax borkumensis (strain ATCC 700651 / DSM 11573 / NCIMB 13689 / SK2).